A 93-amino-acid chain; its full sequence is Neutrophil cationic peptide 1 type B (93 aa).

Positions 1 to 19 are cleaved as a signal peptide; sequence MRTVPLFAACLLLTLMAQA. The propeptide occupies 20 to 62; the sequence is EPLPRAADHSDTKMKGDREDHVAVISFWEEESTSLQDAGAGAG. 3 disulfide bridges follow: Cys65/Cys93, Cys67/Cys82, and Cys72/Cys92.

This sequence belongs to the alpha-defensin family. Bone marrow.

Its subcellular location is the secreted. Has antibiotic, anti-fungi and antiviral activity. In Cavia porcellus (Guinea pig), this protein is Neutrophil cationic peptide 1 type B.